The chain runs to 588 residues: Pescadillo homolog (588 aa).

Residues 344 to 437 enclose the BRCT domain; it reads PVSTLFSDFV…KLVPANLYLP (94 aa). 2 disordered regions span residues 446–533 and 559–588; these read SPWG…EAEE and KKEE…EGKK. The span at 460–493 shows a compositional bias: acidic residues; that stretch reads DAEEEGEDDEDEDSEEGSGAEVEENVDEDEDDEE. Composition is skewed to basic and acidic residues over residues 510–519 and 576–588; these read SDIKDTEVKS and KTKE…EGKK. Residues 512 to 588 are a coiled coil; it reads IKDTEVKSKN…EKLTKLEGKK (77 aa).

It belongs to the pescadillo family. In terms of assembly, component of the NOP7 complex, composed of ERB1, NOP7 and YTM1. The complex is held together by ERB1, which interacts with NOP7 via its N-terminal domain and with YTM1 via a high-affinity interaction between the seven-bladed beta-propeller domains of the 2 proteins. The NOP7 complex associates with the 66S pre-ribosome.

It is found in the nucleus. The protein localises to the nucleolus. Its subcellular location is the nucleoplasm. In terms of biological role, component of the NOP7 complex, which is required for maturation of the 25S and 5.8S ribosomal RNAs and formation of the 60S ribosome. This chain is Pescadillo homolog, found in Vanderwaltozyma polyspora (strain ATCC 22028 / DSM 70294 / BCRC 21397 / CBS 2163 / NBRC 10782 / NRRL Y-8283 / UCD 57-17) (Kluyveromyces polysporus).